Here is a 394-residue protein sequence, read N- to C-terminus: D-aspartate oxidase (394 aa).

FAD-binding residues include Ile-19, Ala-57, Ser-58, and Gly-62. A helical membrane pass occupies residues 190–210 (LIGHEPTAGVIVCVGLGALVL). Asn-214 carries an N-linked (GlcNAc...) asparagine glycan. Arg-342, Gly-373, and Gln-375 together coordinate FAD.

The protein belongs to the DAMOX/DASOX family. The cofactor is FAD.

The protein resides in the membrane. The enzyme catalyses D-aspartate + O2 + H2O = oxaloacetate + H2O2 + NH4(+). Selectively catalyzes the oxidative deamination of acidic amino acids. Protects the organism from the toxicity of D-amino acids. Enables the organism to utilize D-amino acids as a source of nutrients. Enables the organism to utilize D-aspartate and D-asparagine as a source of nitrogen. May play a role in its interaction with the host. This Cryptococcus neoformans var. grubii serotype A (strain H99 / ATCC 208821 / CBS 10515 / FGSC 9487) (Filobasidiella neoformans var. grubii) protein is D-aspartate oxidase.